We begin with the raw amino-acid sequence, 234 residues long: MTPSLKRLPEADRPRERLLRLGPEKLSDVELLAILLGTGSRGRSVIEVARDLLHHCEAKDPGGGLRALLHLRDAERSELVKGLGPAKVCTILAGLHLGLRASAAPLRRVDLCNPRAVFEFLAPRMAHLSIEQFHVILLNAKNQVIDVECVSEGTLTASLVHPREVFKTAIRRSAHAVILAHNHPSGDPTPSREDREITRRLVQAGRVIGIEVLDHLVVGQGGYTSFRERGLLTG.

Residues 110–232 (DLCNPRAVFE…YTSFRERGLL (123 aa)) form the MPN domain. 3 residues coordinate Zn(2+): histidine 181, histidine 183, and aspartate 194. Residues 181–194 (HNHPSGDPTPSRED) carry the JAMM motif motif.

Belongs to the UPF0758 family.

This chain is UPF0758 protein STH371, found in Symbiobacterium thermophilum (strain DSM 24528 / JCM 14929 / IAM 14863 / T).